The sequence spans 397 residues: Argininosuccinate synthase (397 aa).

Ala8–Ser16 serves as a coordination point for ATP. Tyr86 and Ser91 together coordinate L-citrulline. Residue Gly116 coordinates ATP. 3 residues coordinate L-aspartate: Thr118, Asn122, and Asp123. Asn122 serves as a coordination point for L-citrulline. The L-citrulline site is built by Arg126, Ser175, Ser184, Glu260, and Tyr272.

The protein belongs to the argininosuccinate synthase family. Type 1 subfamily. As to quaternary structure, homotetramer.

Its subcellular location is the cytoplasm. The enzyme catalyses L-citrulline + L-aspartate + ATP = 2-(N(omega)-L-arginino)succinate + AMP + diphosphate + H(+). It participates in amino-acid biosynthesis; L-arginine biosynthesis; L-arginine from L-ornithine and carbamoyl phosphate: step 2/3. In Clostridium botulinum (strain Langeland / NCTC 10281 / Type F), this protein is Argininosuccinate synthase.